A 1218-amino-acid polypeptide reads, in one-letter code: Coatomer subunit alpha-2 (1218 aa).

WD repeat units lie at residues 7 to 48, 49 to 88, 91 to 132, 133 to 172, 202 to 241, 246 to 285, 288 to 326, and 363 to 404; these read TKSN…DRFD, EHDGPVRGVHFHATQPLFVSGGDDYKIKVWNYKTHRCLFT, GHLD…AVLT, GHNHYVMCASFHPKEDLVVSASLDQTVRVWDISALRKKSV, GHDRGVNWASFHPTLPLIVSGADDRQVKIWRMNDTKAWEV, GHMNNVSCVMFHAKQDIIVSNSEDKSIRIWDATKRTGIQT, REHDRFWILSAHPEMNLLAAGHDSGMIVFKLERERPAFS, and SLNQ…AGRA. The interval 855-876 is disordered; the sequence is MANGGDGFDAEEGEANEEDGEE. Positions 862–876 are enriched in acidic residues; it reads FDAEEGEANEEDGEE.

As to quaternary structure, oligomeric complex that consists of at least the alpha, beta, beta', gamma, delta, epsilon and zeta subunits.

Its subcellular location is the cytoplasm. It is found in the golgi apparatus membrane. The protein resides in the cytoplasmic vesicle. The protein localises to the COPI-coated vesicle membrane. In terms of biological role, the coatomer is a cytosolic protein complex that binds to dilysine motifs and reversibly associates with Golgi non-clathrin-coated vesicles, which further mediate biosynthetic protein transport from the ER, via the Golgi up to the trans Golgi network. Coatomer complex is required for budding from Golgi membranes, and is essential for the retrograde Golgi-to-ER transport of dilysine-tagged proteins. The polypeptide is Coatomer subunit alpha-2 (Oryza sativa subsp. japonica (Rice)).